We begin with the raw amino-acid sequence, 352 residues long: Photosystem II D2 protein (352 aa).

Thr2 bears the N-acetylthreonine mark. A Phosphothreonine modification is found at Thr2. The helical transmembrane segment at 40–60 (CAYFALGGWLTGTTFVTSWYT) threads the bilayer. His117 provides a ligand contact to chlorophyll a. A helical membrane pass occupies residues 124-140 (GFMLRQFEIARAVKIRP). Positions 129 and 142 each coordinate pheophytin a. A helical membrane pass occupies residues 152–165 (VFVSVFLIYPLGQA). His197 lines the chlorophyll a pocket. A helical membrane pass occupies residues 207–227 (AALLCAIHGATVENTLFEDGD). A plastoquinone-binding residues include His214 and Phe261. Residue His214 participates in Fe cation binding. His268 lines the Fe cation pocket. The helical transmembrane segment at 278 to 294 (GLWMSALGVVGLALNLR) threads the bilayer.

Belongs to the reaction center PufL/M/PsbA/D family. In terms of assembly, PSII is composed of 1 copy each of membrane proteins PsbA, PsbB, PsbC, PsbD, PsbE, PsbF, PsbH, PsbI, PsbJ, PsbK, PsbL, PsbM, PsbT, PsbX, PsbY, PsbZ, Psb30/Ycf12, at least 3 peripheral proteins of the oxygen-evolving complex and a large number of cofactors. It forms dimeric complexes. The D1/D2 heterodimer binds P680, chlorophylls that are the primary electron donor of PSII, and subsequent electron acceptors. It shares a non-heme iron and each subunit binds pheophytin, quinone, additional chlorophylls, carotenoids and lipids. There is also a Cl(-1) ion associated with D1 and D2, which is required for oxygen evolution. The PSII complex binds additional chlorophylls, carotenoids and specific lipids. is required as a cofactor.

The protein resides in the plastid. It is found in the chloroplast thylakoid membrane. The enzyme catalyses 2 a plastoquinone + 4 hnu + 2 H2O = 2 a plastoquinol + O2. Its function is as follows. Photosystem II (PSII) is a light-driven water:plastoquinone oxidoreductase that uses light energy to abstract electrons from H(2)O, generating O(2) and a proton gradient subsequently used for ATP formation. It consists of a core antenna complex that captures photons, and an electron transfer chain that converts photonic excitation into a charge separation. The D1/D2 (PsbA/PsbD) reaction center heterodimer binds P680, the primary electron donor of PSII as well as several subsequent electron acceptors. D2 is needed for assembly of a stable PSII complex. The protein is Photosystem II D2 protein of Tupiella akineta (Green alga).